Consider the following 273-residue polypeptide: Dermonecrotic toxin LapSicTox-alphaIB1b3 (273 aa).

His-5 is a catalytic residue. Residues Glu-25 and Asp-27 each contribute to the Mg(2+) site. His-41 serves as the catalytic Nucleophile. 2 cysteine pairs are disulfide-bonded: Cys-45–Cys-51 and Cys-47–Cys-190. Asp-85 serves as a coordination point for Mg(2+). Residue Asn-250 is glycosylated (N-linked (GlcNAc...) asparagine).

It belongs to the arthropod phospholipase D family. Class II subfamily. Requires Mg(2+) as cofactor. Expressed by the venom gland.

Its subcellular location is the secreted. The catalysed reaction is an N-(acyl)-sphingosylphosphocholine = an N-(acyl)-sphingosyl-1,3-cyclic phosphate + choline. It carries out the reaction an N-(acyl)-sphingosylphosphoethanolamine = an N-(acyl)-sphingosyl-1,3-cyclic phosphate + ethanolamine. It catalyses the reaction a 1-acyl-sn-glycero-3-phosphocholine = a 1-acyl-sn-glycero-2,3-cyclic phosphate + choline. The enzyme catalyses a 1-acyl-sn-glycero-3-phosphoethanolamine = a 1-acyl-sn-glycero-2,3-cyclic phosphate + ethanolamine. In terms of biological role, dermonecrotic toxins cleave the phosphodiester linkage between the phosphate and headgroup of certain phospholipids (sphingolipid and lysolipid substrates), forming an alcohol (often choline) and a cyclic phosphate. This toxin acts on sphingomyelin (SM). It may also act on ceramide phosphoethanolamine (CPE), lysophosphatidylcholine (LPC) and lysophosphatidylethanolamine (LPE), but not on lysophosphatidylserine (LPS), and lysophosphatidylglycerol (LPG). It acts by transphosphatidylation, releasing exclusively cyclic phosphate products as second products. Induces dermonecrosis, hemolysis, increased vascular permeability, edema, inflammatory response, and platelet aggregation. The polypeptide is Dermonecrotic toxin LapSicTox-alphaIB1b3 (Loxosceles apachea (Apache recluse spider)).